A 308-amino-acid chain; its full sequence is Cyclopropane mycolic acid synthase 2 (308 aa).

Residues 44–45, 79–87, 105–110, and 137–138 contribute to the S-adenosyl-L-methionine site; these read YS, LLDIGCGWG, TLSANQ, and WE. The active site involves C290.

The protein belongs to the CFA/CMAS family. As to quaternary structure, homodimer.

It is found in the cytoplasm. The catalysed reaction is a 1-acyl-2-(9Z)-enoyl-sn-glycero-3-phospholipid + S-adenosyl-L-methionine = a 1-acyl-2-(9-cyclopronane)-acyl-sn-glycero-3-phospholipid + S-adenosyl-L-homocysteine + H(+). The protein operates within lipid metabolism; mycolic acid biosynthesis. In terms of biological role, catalyzes the formation of trans cyclopropanated ketomycolate or methoxymycolate through the conversion of a double bond to a cyclopropane ring at the proximal position of an oxygenated mycolic acid via the transfer of a methylene group from S-adenosyl-L-methionine. In the absence of MmaA2, CmaA2 has a non-specific cis-cyclopropanating activity and is able to catalyze the conversion of a double bond to a cis cyclopropane ring at the distal position of an alpha mycolic acid. Cyclopropanated mycolic acids are key factors participating in cell envelope permeability, host immunomodulation and persistence. This Mycobacterium leprae (strain TN) protein is Cyclopropane mycolic acid synthase 2 (cmaA2).